We begin with the raw amino-acid sequence, 619 residues long: Translation initiation factor eIF2B subunit delta (619 aa).

Residues glycine 21 to proline 32 are compositionally biased toward basic and acidic residues. The tract at residues glycine 21 to lysine 251 is disordered. A compositionally biased stretch (low complexity) spans threonine 42–proline 56. Residues leucine 57–serine 84 are compositionally biased toward polar residues. Low complexity predominate over residues asparagine 85 to asparagine 98. The span at alanine 99 to asparagine 125 shows a compositional bias: polar residues. Over residues serine 136–glutamine 199 the composition is skewed to low complexity. The segment covering glutamine 200–glutamine 244 has biased composition (basic and acidic residues).

Belongs to the eIF-2B alpha/beta/delta subunits family. Component of the translation initiation factor 2B (eIF2B) complex which is a heterodecamer of two sets of five different subunits: alpha, beta, gamma, delta and epsilon. Subunits alpha, beta and delta comprise a regulatory subcomplex and subunits epsilon and gamma comprise a catalytic subcomplex. Within the complex, the hexameric regulatory complex resides at the center, with the two heterodimeric catalytic subcomplexes bound on opposite sides.

The protein resides in the cytoplasm. Its subcellular location is the cytosol. Acts as a component of the translation initiation factor 2B (eIF2B) complex, which catalyzes the exchange of GDP for GTP on eukaryotic initiation factor 2 (eIF2) gamma subunit. Its guanine nucleotide exchange factor activity is repressed when bound to eIF2 complex phosphorylated on the alpha subunit, thereby limiting the amount of methionyl-initiator methionine tRNA available to the ribosome and consequently global translation is repressed. This chain is Translation initiation factor eIF2B subunit delta (eif2b4), found in Dictyostelium discoideum (Social amoeba).